Here is a 725-residue protein sequence, read N- to C-terminus: Glutamine-dependent NAD(+) synthetase (725 aa).

The CN hydrolase domain maps to 5-275 (VTVATCALNQ…VEVLTATLDL (271 aa)). The active-site Proton acceptor; for glutaminase activity is glutamate 45. Lysine 114 serves as the catalytic For glutaminase activity. The active-site Nucleophile; for glutaminase activity is cysteine 175. Residues 325–706 (YHRPEEEISL…KASQTREEQV (382 aa)) are ligase. 355 to 362 (PLSGGVDS) contributes to the ATP binding site. Serine 357 is a catalytic residue.

This sequence in the C-terminal section; belongs to the NAD synthetase family. Homohexamer. In terms of tissue distribution, highly expressed in small intestine, kidney, liver and testis. Weakly expressed in skeletal muscle, spleen, lung, heart and brain.

It carries out the reaction deamido-NAD(+) + L-glutamine + ATP + H2O = L-glutamate + AMP + diphosphate + NAD(+) + H(+). It functions in the pathway cofactor biosynthesis; NAD(+) biosynthesis; NAD(+) from deamido-NAD(+) (L-Gln route): step 1/1. Catalyzes the final step of the nicotinamide adenine dinucleotide (NAD) de novo synthesis pathway, the ATP-dependent amidation of deamido-NAD using L-glutamine as a nitrogen source. The sequence is that of Glutamine-dependent NAD(+) synthetase (Nadsyn1) from Mus musculus (Mouse).